The chain runs to 117 residues: Large ribosomal subunit protein bL20c (117 aa).

It belongs to the bacterial ribosomal protein bL20 family.

It is found in the plastid. Its subcellular location is the chloroplast. Functionally, binds directly to 23S ribosomal RNA and is necessary for the in vitro assembly process of the 50S ribosomal subunit. It is not involved in the protein synthesizing functions of that subunit. The sequence is that of Large ribosomal subunit protein bL20c from Ceratophyllum demersum (Rigid hornwort).